A 578-amino-acid chain; its full sequence is GTP diphosphokinase CRSH3, chloroplastic (578 aa).

Residues 1–45 (MANAGVNETVAVAVAIDAPGVGHDHGAAGEVRRPSTRRLAPAGSG) constitute a chloroplast transit peptide. One can recognise an HD domain in the interval 99-199 (SVSRALVVAA…LELAVKLDAM (101 aa)). 2 consecutive EF-hand domains span residues 468-503 (ATAG…LGAG) and 506-537 (DAEE…VKLK). Ca(2+) contacts are provided by Asp481, Asn483, Asp485, Arg487, Glu492, Asp515, Asn517, Asp519, Ser521, and Glu526.

The protein belongs to the RelA/SpoT family. As to expression, expressed in roots and shoots.

Its subcellular location is the plastid. The protein localises to the chloroplast. The enzyme catalyses GTP + ATP = guanosine 3'-diphosphate 5'-triphosphate + AMP. Its activity is regulated as follows. Activated by calcium. In terms of biological role, possesses calcium-dependent ppGpp (guanosine 3'-diphosphate 5'-diphosphate) synthetase activity in vitro and is able to functionally complement E.coli relA mutants. May be involved in a rapid plant ppGpp-mediated response to pathogens and other stresses. This is GTP diphosphokinase CRSH3, chloroplastic from Oryza sativa subsp. japonica (Rice).